We begin with the raw amino-acid sequence, 220 residues long: Deoxyribose-phosphate aldolase 2 (220 aa).

D89 (proton donor/acceptor) is an active-site residue. Residue K151 is the Schiff-base intermediate with acetaldehyde of the active site. The active-site Proton donor/acceptor is K180.

Belongs to the DeoC/FbaB aldolase family. DeoC type 1 subfamily.

Its subcellular location is the cytoplasm. It catalyses the reaction 2-deoxy-D-ribose 5-phosphate = D-glyceraldehyde 3-phosphate + acetaldehyde. It participates in carbohydrate degradation; 2-deoxy-D-ribose 1-phosphate degradation; D-glyceraldehyde 3-phosphate and acetaldehyde from 2-deoxy-alpha-D-ribose 1-phosphate: step 2/2. Its function is as follows. Catalyzes a reversible aldol reaction between acetaldehyde and D-glyceraldehyde 3-phosphate to generate 2-deoxy-D-ribose 5-phosphate. The chain is Deoxyribose-phosphate aldolase 2 from Staphylococcus aureus (strain MRSA252).